The following is a 286-amino-acid chain: Aminoglycoside N(3)-acetyltransferase VIII (286 aa).

It belongs to the antibiotic N-acetyltransferase family.

The catalysed reaction is a 2-deoxystreptamine antibiotic + acetyl-CoA = an N(3)-acetyl-2-deoxystreptamine antibiotic + CoA + H(+). Resistance to neomycin. This Streptomyces fradiae (Streptomyces roseoflavus) protein is Aminoglycoside N(3)-acetyltransferase VIII (aacC8).